The following is a 354-amino-acid chain: S-adenosylmethionine:tRNA ribosyltransferase-isomerase (354 aa).

This sequence belongs to the QueA family. Monomer.

The protein resides in the cytoplasm. It catalyses the reaction 7-aminomethyl-7-carbaguanosine(34) in tRNA + S-adenosyl-L-methionine = epoxyqueuosine(34) in tRNA + adenine + L-methionine + 2 H(+). The protein operates within tRNA modification; tRNA-queuosine biosynthesis. Transfers and isomerizes the ribose moiety from AdoMet to the 7-aminomethyl group of 7-deazaguanine (preQ1-tRNA) to give epoxyqueuosine (oQ-tRNA). This is S-adenosylmethionine:tRNA ribosyltransferase-isomerase from Methylobacterium radiotolerans (strain ATCC 27329 / DSM 1819 / JCM 2831 / NBRC 15690 / NCIMB 10815 / 0-1).